Reading from the N-terminus, the 85-residue chain is Putative membrane protein insertion efficiency factor (85 aa).

The protein belongs to the UPF0161 family.

It is found in the cell membrane. Could be involved in insertion of integral membrane proteins into the membrane. In terms of biological role, lyses fish blood cells. The protein is Putative membrane protein insertion efficiency factor (hlyA) of Aeromonas hydrophila.